Here is a 340-residue protein sequence, read N- to C-terminus: N-acetyl-gamma-glutamyl-phosphate reductase (340 aa).

Cys148 is a catalytic residue.

This sequence belongs to the NAGSA dehydrogenase family. Type 1 subfamily.

It is found in the cytoplasm. It catalyses the reaction N-acetyl-L-glutamate 5-semialdehyde + phosphate + NADP(+) = N-acetyl-L-glutamyl 5-phosphate + NADPH + H(+). It participates in amino-acid biosynthesis; L-arginine biosynthesis; N(2)-acetyl-L-ornithine from L-glutamate: step 3/4. In terms of biological role, catalyzes the NADPH-dependent reduction of N-acetyl-5-glutamyl phosphate to yield N-acetyl-L-glutamate 5-semialdehyde. The sequence is that of N-acetyl-gamma-glutamyl-phosphate reductase from Methanosarcina mazei (strain ATCC BAA-159 / DSM 3647 / Goe1 / Go1 / JCM 11833 / OCM 88) (Methanosarcina frisia).